Consider the following 662-residue polypeptide: UvrABC system protein B (662 aa).

One can recognise a Helicase ATP-binding domain in the interval 31–188 (DNIEGGEKAQ…NDLVDIQFER (158 aa)). Position 44-51 (44-51 (GATGTGKT)) interacts with ATP. A Beta-hairpin motif is present at residues 97 to 120 (YYDYYQPEAYVPSSDTYIEKDSSV). The Helicase C-terminal domain maps to 435–601 (QIDDLLGEIN…TIKKEIRDLI (167 aa)). The 36-residue stretch at 626–661 (KELVKKLEKQMQEAVEVLDFELAAQIRDMMLEVKAL) folds into the UVR domain.

The protein belongs to the UvrB family. Forms a heterotetramer with UvrA during the search for lesions. Interacts with UvrC in an incision complex.

It is found in the cytoplasm. Functionally, the UvrABC repair system catalyzes the recognition and processing of DNA lesions. A damage recognition complex composed of 2 UvrA and 2 UvrB subunits scans DNA for abnormalities. Upon binding of the UvrA(2)B(2) complex to a putative damaged site, the DNA wraps around one UvrB monomer. DNA wrap is dependent on ATP binding by UvrB and probably causes local melting of the DNA helix, facilitating insertion of UvrB beta-hairpin between the DNA strands. Then UvrB probes one DNA strand for the presence of a lesion. If a lesion is found the UvrA subunits dissociate and the UvrB-DNA preincision complex is formed. This complex is subsequently bound by UvrC and the second UvrB is released. If no lesion is found, the DNA wraps around the other UvrB subunit that will check the other stand for damage. This is UvrABC system protein B from Streptococcus pneumoniae (strain Hungary19A-6).